Reading from the N-terminus, the 201-residue chain is Sterile alpha motif domain-containing protein 12 (201 aa).

Residues 77-143 form the SAM domain; sequence WTQQDVCKWL…LQQVLQLKVR (67 aa).

This is Sterile alpha motif domain-containing protein 12 (SAMD12) from Pongo abelii (Sumatran orangutan).